Reading from the N-terminus, the 586-residue chain is Phosphomethylpyrimidine synthase (586 aa).

The segment at 1-33 is disordered; that stretch reads MKQSVSAEQIELKSSLPGSKKVYVDGPREGMKV. Positions 22-33 are enriched in basic and acidic residues; it reads VYVDGPREGMKV. Substrate-binding positions include Asn193, Met222, Tyr251, His287, 307–309, 348–351, and Glu387; these read SRG and DGLR. His391 serves as a coordination point for Zn(2+). Residue Tyr414 coordinates substrate. His455 is a Zn(2+) binding site. [4Fe-4S] cluster is bound by residues Cys535, Cys538, and Cys543.

This sequence belongs to the ThiC family. [4Fe-4S] cluster serves as cofactor.

The catalysed reaction is 5-amino-1-(5-phospho-beta-D-ribosyl)imidazole + S-adenosyl-L-methionine = 4-amino-2-methyl-5-(phosphooxymethyl)pyrimidine + CO + 5'-deoxyadenosine + formate + L-methionine + 3 H(+). The protein operates within cofactor biosynthesis; thiamine diphosphate biosynthesis. In terms of biological role, catalyzes the synthesis of the hydroxymethylpyrimidine phosphate (HMP-P) moiety of thiamine from aminoimidazole ribotide (AIR) in a radical S-adenosyl-L-methionine (SAM)-dependent reaction. In Bacillus cereus (strain B4264), this protein is Phosphomethylpyrimidine synthase.